Reading from the N-terminus, the 36-residue chain is Photosystem I reaction center subunit VIII (36 aa).

A helical membrane pass occupies residues 4-24 (FSLPSILVPLVGLVLPAIAMA).

It belongs to the PsaI family.

The protein resides in the plastid. It is found in the chloroplast thylakoid membrane. Its function is as follows. May help in the organization of the PsaL subunit. The polypeptide is Photosystem I reaction center subunit VIII (Piper cenocladum (Ant piper)).